Here is a 251-residue protein sequence, read N- to C-terminus: Isoprenyl transferase (251 aa).

The active site involves Asp31. Asp31 contacts Mg(2+). Residues 32 to 35 (GNGR), Trp36, Arg44, His48, and 76 to 78 (STE) each bind substrate. Asn79 serves as the catalytic Proton acceptor. Residues Trp80, Arg82, Arg199, and 205-207 (RIS) contribute to the substrate site. Mg(2+) is bound at residue Glu218.

This sequence belongs to the UPP synthase family. In terms of assembly, homodimer. Mg(2+) serves as cofactor.

Catalyzes the condensation of isopentenyl diphosphate (IPP) with allylic pyrophosphates generating different type of terpenoids. The protein is Isoprenyl transferase of Thermosynechococcus vestitus (strain NIES-2133 / IAM M-273 / BP-1).